The sequence spans 1451 residues: DNA polymerase III PolC-type (1451 aa).

The Exonuclease domain maps to 416-575 (FVIFDIETTG…YDTEALKKVF (160 aa)).

The protein belongs to the DNA polymerase type-C family. PolC subfamily.

It is found in the cytoplasm. The enzyme catalyses DNA(n) + a 2'-deoxyribonucleoside 5'-triphosphate = DNA(n+1) + diphosphate. Required for replicative DNA synthesis. This DNA polymerase also exhibits 3' to 5' exonuclease activity. In Mycoplasma genitalium (strain ATCC 33530 / DSM 19775 / NCTC 10195 / G37) (Mycoplasmoides genitalium), this protein is DNA polymerase III PolC-type.